Here is a 24-residue protein sequence, read N- to C-terminus: Protein YahV (24 aa).

The chain crosses the membrane as a helical span at residues 4–24 (ILLNVLNIVFIGIAIILVIIC).

Its subcellular location is the cell inner membrane. In Escherichia coli (strain K12), this protein is Protein YahV.